Here is a 211-residue protein sequence, read N- to C-terminus: FMN-dependent NADH:quinone oxidoreductase 2 (211 aa).

102 to 105 (MWNF) is a binding site for FMN.

Belongs to the azoreductase type 1 family. Homodimer. The cofactor is FMN.

The enzyme catalyses 2 a quinone + NADH + H(+) = 2 a 1,4-benzosemiquinone + NAD(+). It carries out the reaction N,N-dimethyl-1,4-phenylenediamine + anthranilate + 2 NAD(+) = 2-(4-dimethylaminophenyl)diazenylbenzoate + 2 NADH + 2 H(+). Functionally, quinone reductase that provides resistance to thiol-specific stress caused by electrophilic quinones. Its function is as follows. Also exhibits azoreductase activity. Catalyzes the reductive cleavage of the azo bond in aromatic azo compounds to the corresponding amines. This Bacillus thuringiensis subsp. konkukian (strain 97-27) protein is FMN-dependent NADH:quinone oxidoreductase 2.